The primary structure comprises 398 residues: Tryptophan synthase beta chain (398 aa).

At Lys-92 the chain carries N6-(pyridoxal phosphate)lysine.

Belongs to the TrpB family. Tetramer of two alpha and two beta chains. Requires pyridoxal 5'-phosphate as cofactor.

It carries out the reaction (1S,2R)-1-C-(indol-3-yl)glycerol 3-phosphate + L-serine = D-glyceraldehyde 3-phosphate + L-tryptophan + H2O. The protein operates within amino-acid biosynthesis; L-tryptophan biosynthesis; L-tryptophan from chorismate: step 5/5. Functionally, the beta subunit is responsible for the synthesis of L-tryptophan from indole and L-serine. This is Tryptophan synthase beta chain from Nitrosospira multiformis (strain ATCC 25196 / NCIMB 11849 / C 71).